The sequence spans 421 residues: Glucan 1,3-beta-glucosidase (421 aa).

The N-terminal stretch at 1 to 15 is a signal peptide; the sequence is MKLTKLVALAGAALA. Residue Glu213 is the Proton donor of the active site. Disulfide bonds link Cys296–Cys419 and Cys321–Cys347. The active-site Nucleophile is Glu313.

This sequence belongs to the glycosyl hydrolase 5 (cellulase A) family.

It localises to the secreted. It carries out the reaction Successive hydrolysis of beta-D-glucose units from the non-reducing ends of (1-&gt;3)-beta-D-glucans, releasing alpha-glucose.. This Yarrowia lipolytica (strain CLIB 122 / E 150) (Yeast) protein is Glucan 1,3-beta-glucosidase (EXG1).